The sequence spans 737 residues: Probable serine/threonine-protein kinase DDB_G0269628 (737 aa).

Positions 8-488 constitute a Protein kinase domain; that stretch reads YKLIKDLRSG…TLQKMDTSLL (481 aa). Residues 14–22 and K36 contribute to the ATP site; that span reads LRSGGEGKA. Disordered regions lie at residues 155 to 251 and 278 to 298; these read NTIQ…KKCS and TTAA…SSSN. The segment covering 156-167 has biased composition (polar residues); it reads TIQHSHSSSSLV. Positions 168-229 are enriched in low complexity; that stretch reads NGTTSPTNAT…PSSPSSPLSP (62 aa). Residue D349 is the Proton acceptor of the active site.

This sequence belongs to the protein kinase superfamily. NEK Ser/Thr protein kinase family. NIMA subfamily.

The catalysed reaction is L-seryl-[protein] + ATP = O-phospho-L-seryl-[protein] + ADP + H(+). It catalyses the reaction L-threonyl-[protein] + ATP = O-phospho-L-threonyl-[protein] + ADP + H(+). In Dictyostelium discoideum (Social amoeba), this protein is Probable serine/threonine-protein kinase DDB_G0269628.